Here is a 246-residue protein sequence, read N- to C-terminus: 2-C-methyl-D-erythritol 4-phosphate cytidylyltransferase (246 aa).

It belongs to the IspD/TarI cytidylyltransferase family. IspD subfamily.

The enzyme catalyses 2-C-methyl-D-erythritol 4-phosphate + CTP + H(+) = 4-CDP-2-C-methyl-D-erythritol + diphosphate. It functions in the pathway isoprenoid biosynthesis; isopentenyl diphosphate biosynthesis via DXP pathway; isopentenyl diphosphate from 1-deoxy-D-xylulose 5-phosphate: step 2/6. Its function is as follows. Catalyzes the formation of 4-diphosphocytidyl-2-C-methyl-D-erythritol from CTP and 2-C-methyl-D-erythritol 4-phosphate (MEP). This is 2-C-methyl-D-erythritol 4-phosphate cytidylyltransferase from Chlorobaculum tepidum (strain ATCC 49652 / DSM 12025 / NBRC 103806 / TLS) (Chlorobium tepidum).